The chain runs to 148 residues: WAP four-disulfide core domain protein 12 (148 aa).

Residues methionine 1–alanine 23 form the signal peptide. The WAP domain maps to glycine 27–aspartate 74. 4 disulfides stabilise this stretch: cysteine 34/cysteine 62, cysteine 41/cysteine 66, cysteine 49/cysteine 61, and cysteine 55/cysteine 70. The segment at aspartate 74–serine 148 is disordered.

Its subcellular location is the secreted. Antibacterial protein. Putative acid-stable proteinase inhibitor. This chain is WAP four-disulfide core domain protein 12 (WFDC12), found in Lemur catta (Ring-tailed lemur).